We begin with the raw amino-acid sequence, 423 residues long: GTPase Obg (423 aa).

Residues 1–158 (MFIDTARIYI…MWVRLELKLL (158 aa)) enclose the Obg domain. Residues 159 to 329 (ADVGLIGFPN…LLDKTIEILS (171 aa)) form the OBG-type G domain. GTP contacts are provided by residues 165 to 172 (GFPNAGKS), 190 to 194 (FTTLT), 211 to 214 (DIPG), 281 to 284 (NKID), and 310 to 312 (SAL). Residues S172 and T192 each coordinate Mg(2+). Positions 346 to 423 (TPPEEEETLN…VRDFEFEYYE (78 aa)) constitute an OCT domain.

Belongs to the TRAFAC class OBG-HflX-like GTPase superfamily. OBG GTPase family. Monomer. It depends on Mg(2+) as a cofactor.

The protein resides in the cytoplasm. Functionally, an essential GTPase which binds GTP, GDP and possibly (p)ppGpp with moderate affinity, with high nucleotide exchange rates and a fairly low GTP hydrolysis rate. Plays a role in control of the cell cycle, stress response, ribosome biogenesis and in those bacteria that undergo differentiation, in morphogenesis control. This Thermoanaerobacter pseudethanolicus (strain ATCC 33223 / 39E) (Clostridium thermohydrosulfuricum) protein is GTPase Obg.